Reading from the N-terminus, the 565-residue chain is Membrane protein insertase YidC (565 aa).

6 helical membrane passes run 6–26, 348–368, 370–390, 437–457, 479–499, and 516–536; these read VLLI…WSKN, LMAL…SLLH, WGWA…PLSA, GGCF…WVLV, PYFI…KLTP, and PLIF…YWVI.

This sequence belongs to the OXA1/ALB3/YidC family. Type 1 subfamily. As to quaternary structure, interacts with the Sec translocase complex via SecD. Specifically interacts with transmembrane segments of nascent integral membrane proteins during membrane integration.

The protein resides in the cell inner membrane. Functionally, required for the insertion and/or proper folding and/or complex formation of integral membrane proteins into the membrane. Involved in integration of membrane proteins that insert both dependently and independently of the Sec translocase complex, as well as at least some lipoproteins. Aids folding of multispanning membrane proteins. This chain is Membrane protein insertase YidC, found in Xylella fastidiosa (strain M23).